We begin with the raw amino-acid sequence, 284 residues long: Fructosamine kinase FrlD (284 aa).

Belongs to the carbohydrate kinase PfkB family.

Catalyzes the phosphorylation of a range of fructosamines to fructosamine 6-phosphates. The protein is Fructosamine kinase FrlD (frlD) of Bacillus subtilis (strain 168).